The primary structure comprises 500 residues: NAD(P)H-quinone oxidoreductase chain 4, chloroplastic (500 aa).

The next 14 membrane-spanning stretches (helical) occupy residues Phe4–Leu24, Tyr35–Phe55, Ile87–Val107, Leu113–Ser130, Leu134–Met154, Phe167–Leu187, Ile211–His231, His242–Val262, Ala272–Ala292, Ile305–Asp325, Gly330–Gly350, Leu386–Thr406, Ile416–Met436, and Leu462–Val482.

This sequence belongs to the complex I subunit 4 family.

It is found in the plastid. Its subcellular location is the chloroplast thylakoid membrane. It catalyses the reaction a plastoquinone + NADH + (n+1) H(+)(in) = a plastoquinol + NAD(+) + n H(+)(out). It carries out the reaction a plastoquinone + NADPH + (n+1) H(+)(in) = a plastoquinol + NADP(+) + n H(+)(out). This chain is NAD(P)H-quinone oxidoreductase chain 4, chloroplastic, found in Olimarabidopsis pumila (Dwarf rocket).